Here is a 238-residue protein sequence, read N- to C-terminus: Large ribosomal subunit protein uL5c (238 aa).

The protein belongs to the universal ribosomal protein uL5 family. As to quaternary structure, part of the 50S ribosomal subunit; contacts the 5S rRNA.

The protein localises to the plastid. The protein resides in the chloroplast. Binds 5S rRNA, forms part of the central protuberance of the 50S subunit. This Phaeodactylum tricornutum (strain CCAP 1055/1) protein is Large ribosomal subunit protein uL5c (rpl5).